We begin with the raw amino-acid sequence, 391 residues long: Ethanol acetyltransferase 1 (391 aa).

The transit peptide at 1–24 (MFFTKVLNNQVANGLKQLPVHKRV) directs the protein to the mitochondrion. Residues 48-154 (PIVFVHGIFG…DNSPIEQPHI (107 aa)) enclose the AB hydrolase-1 domain. Residues S121, D145, and H295 each act as charge relay system in the active site.

This sequence belongs to the AB hydrolase superfamily.

It localises to the mitochondrion. It carries out the reaction ethanol + acetyl-CoA = ethyl acetate + CoA. It catalyses the reaction acetyl-CoA + H2O = acetate + CoA + H(+). The catalysed reaction is ethyl acetate + H2O = ethanol + acetate + H(+). By ethanol. Thioesterase and esterase reactions are highly repressed in the presence of high ethanol concentrations. In terms of biological role, alcohol acetyltransferase that catalyzes the synthesis of ethyl acetate from ethanol and acetyl-CoA. Can also function as a thioesterase by hydrolyzing acetyl-CoA in the absence of ethanol, as well as esterase hydrolyzing ethyl acetate. The chain is Ethanol acetyltransferase 1 (EAT1) from Wickerhamomyces anomalus (strain ATCC 58044 / CBS 1984 / NCYC 433 / NRRL Y-366-8) (Yeast).